A 313-amino-acid chain; its full sequence is Ribosomal RNA small subunit methyltransferase H (313 aa).

Residues 35 to 37, Asp55, Phe80, Asp102, and Gln109 contribute to the S-adenosyl-L-methionine site; that span reads GGH.

The protein belongs to the methyltransferase superfamily. RsmH family.

The protein localises to the cytoplasm. It carries out the reaction cytidine(1402) in 16S rRNA + S-adenosyl-L-methionine = N(4)-methylcytidine(1402) in 16S rRNA + S-adenosyl-L-homocysteine + H(+). Its function is as follows. Specifically methylates the N4 position of cytidine in position 1402 (C1402) of 16S rRNA. This Shewanella frigidimarina (strain NCIMB 400) protein is Ribosomal RNA small subunit methyltransferase H.